The following is a 626-amino-acid chain: DNA mismatch repair protein MutL (626 aa).

2 disordered regions span residues 385–413 and 418–437; these read SGAS…PSMV and LTPS…VAPD.

This sequence belongs to the DNA mismatch repair MutL/HexB family.

This protein is involved in the repair of mismatches in DNA. It is required for dam-dependent methyl-directed DNA mismatch repair. May act as a 'molecular matchmaker', a protein that promotes the formation of a stable complex between two or more DNA-binding proteins in an ATP-dependent manner without itself being part of a final effector complex. This Chlorobaculum parvum (strain DSM 263 / NCIMB 8327) (Chlorobium vibrioforme subsp. thiosulfatophilum) protein is DNA mismatch repair protein MutL.